The chain runs to 396 residues: Obg-like ATPase 1 (396 aa).

Positions 23–283 (LKIGIVGLPN…LSAEERQKYL (261 aa)) constitute an OBG-type G domain. 32–37 (NVGKST) serves as a coordination point for ATP. Mg(2+)-binding residues include S36 and T56. L231 is an ATP binding site. The Nuclear export signal signature appears at 267-274 (LELRLQEL). K294 carries the N6-acetyllysine modification. Residues 304–387 (QLEYFFTAGP…EDGDIIFFKF (84 aa)) enclose the TGS domain.

This sequence belongs to the TRAFAC class OBG-HflX-like GTPase superfamily. OBG GTPase family. YchF/OLA1 subfamily. As to quaternary structure, monomer. Requires Mg(2+) as cofactor.

Its subcellular location is the cytoplasm. It localises to the nucleus. It is found in the nucleolus. Hydrolyzes ATP, and can also hydrolyze GTP with lower efficiency. Has lower affinity for GTP. The sequence is that of Obg-like ATPase 1 from Bos taurus (Bovine).